The sequence spans 266 residues: Agamous-like MADS-box protein AGL97 (266 aa).

An MADS-box domain is found at 3–63; it reads GVKRKIAIEK…SNSNAAFYSF (61 aa). Positions 88 to 130 form a coiled coil; that stretch reads WEDESLLKSENLEELREAMDSMSTMLRDLKELEKQRDHQTQTL.

In terms of assembly, interacts with AGL27 and AGL62.

It is found in the nucleus. In terms of biological role, putative transcription factor. This is Agamous-like MADS-box protein AGL97 (AGL97) from Arabidopsis thaliana (Mouse-ear cress).